We begin with the raw amino-acid sequence, 431 residues long: Argininosuccinate lyase (431 aa).

This sequence belongs to the lyase 1 family. Argininosuccinate lyase subfamily.

The protein localises to the cytoplasm. The catalysed reaction is 2-(N(omega)-L-arginino)succinate = fumarate + L-arginine. It participates in amino-acid biosynthesis; L-arginine biosynthesis; L-arginine from L-ornithine and carbamoyl phosphate: step 3/3. The polypeptide is Argininosuccinate lyase (Xanthomonas oryzae pv. oryzae (strain MAFF 311018)).